The following is a 403-amino-acid chain: Casein kinase I isoform delta-A (403 aa).

The Protein kinase domain occupies 9–277; the sequence is YRLGRKIGSG…YLRQLFRNLF (269 aa). Residues 15–23 and K38 contribute to the ATP site; that span reads IGSGSFGDI. D128 acts as the Proton acceptor in catalysis. Positions 315–340 are autoinhibitory; that stretch reads QGRIPLPRVMLPTSSGRPRGTQEVAP. Residues 322–403 are disordered; it reads RVMLPTSSGR…PSGLQSAVPR (82 aa).

It belongs to the protein kinase superfamily. As to quaternary structure, monomer. Interacts with per1 and per2. Component of the circadian core oscillator. In terms of processing, autophosphorylated on serine and threonine residues.

The protein resides in the cytoplasm. The protein localises to the nucleus. It carries out the reaction L-seryl-[protein] + ATP = O-phospho-L-seryl-[protein] + ADP + H(+). The catalysed reaction is L-threonyl-[protein] + ATP = O-phospho-L-threonyl-[protein] + ADP + H(+). Its activity is regulated as follows. Exhibits substrate-dependent heparin activation. Functionally, casein kinases are operationally defined by their preferential utilization of acidic proteins such as caseins as substrates. Central component of the circadian clock. May act as a negative regulator of circadian rhythmicity by phosphorylating per1 and per2, which may lead to their degradation. Participates in wnt signaling. The polypeptide is Casein kinase I isoform delta-A (csnk1da) (Danio rerio (Zebrafish)).